The sequence spans 84 residues: UPF0473 protein CLI_2624 (84 aa).

Belongs to the UPF0473 family.

This Clostridium botulinum (strain Langeland / NCTC 10281 / Type F) protein is UPF0473 protein CLI_2624.